Reading from the N-terminus, the 1481-residue chain is Cystic fibrosis transmembrane conductance regulator (1481 aa).

The Cytoplasmic portion of the chain corresponds to 1-77; the sequence is MQRSPLEKAS…KLINALRRCF (77 aa). A helical membrane pass occupies residues 78-98; that stretch reads FWRFTFYGILLYLGEVTKAVQ. The ABC transmembrane type-1 1 domain maps to 81-365; sequence FTFYGILLYL…WAVQTWYDSL (285 aa). At 99–122 the chain is on the extracellular side; it reads PLLLGRIIASYDPDNKTERSIAIY. A helical transmembrane segment spans residues 123–146; that stretch reads LGIGLCLLFIVRTLLLHPAIFGLH. Residues 147-195 are Cytoplasmic-facing; it reads HIGMQMRIAMFSLIYKKTLKLSSRVLDKISIGQLVSLLSNNLNKFDEGL. The helical transmembrane segment at 196–216 threads the bilayer; that stretch reads ALAHFVWIAPLQVALLMGLIW. Residues 217–222 are Extracellular-facing; the sequence is ELLQAS. Residues 223-243 traverse the membrane as a helical segment; sequence AFCGLGFLIVLALFQAGLGRM. Residues 244–298 lie on the Cytoplasmic side of the membrane; sequence MMKYRDQRAGKINERLVITSEMIENIQSVKAYCWEEAMEKMIENLRQTELKLTRK. A helical membrane pass occupies residues 299–319; sequence AAYVRYFNSSAFFFSGFFVVF. Residues 320-339 lie on the Extracellular side of the membrane; it reads LSVLPYALIKGIALRKIFTT. The chain crosses the membrane as a helical span at residues 340–358; that stretch reads ISFCIVLRMAVTRQFPWAV. The Cytoplasmic portion of the chain corresponds to 359–858; the sequence is QTWYDSLGAI…YLRYITLHKS (500 aa). ATP is bound by residues W401, S434, 458–465, and Q493; that span reads GSTGAGKT. The region spanning 423–646 is the ABC transporter 1 domain; it reads NGDDNLFFSN…RPDFSSKLMG (224 aa). Residue C524 is the site of S-palmitoyl cysteine attachment. S549 and S660 each carry phosphoserine. Residues 654–831 form a disordered R region region; the sequence is SSERRNSILT…EEINEEDLKE (178 aa). Residue S670 is modified to Phosphoserine; by PKA. Phosphoserine is present on S686. Residue K688 forms a Glycyl lysine isopeptide (Lys-Gly) (interchain with G-Cter in ubiquitin) linkage. Residues S700 and S712 each carry the phosphoserine modification. A Phosphothreonine modification is found at T717. Phosphoserine is present on residues S737, S753, S768, S790, S795, and S813. Residues 859–879 form a helical membrane-spanning segment; the sequence is LIFVLIWCLVIFLAEVAASLV. The ABC transmembrane type-1 2 domain occupies 859-1155; sequence LIFVLIWCLV…AVNSSIDVDS (297 aa). Residues 880–918 lie on the Extracellular side of the membrane; sequence LLWLLGNTRFQDKGNSTYSRNNSYAVIITNTSSYYVFYI. Residues N894, N900, and N909 are each glycosylated (N-linked (GlcNAc...) asparagine). The discontinuously helical transmembrane segment at 919 to 939 threads the bilayer; the sequence is YVGVADTLLALGFFRGLPLVH. Topologically, residues 940–990 are cytoplasmic; it reads TLITVSKILHHKMLHSVLQAPMSTLNTLKAGGILNRFSKDIAILDDLLPLT. A helical transmembrane segment spans residues 991 to 1011; the sequence is IFDFIQLLLIVIGAIAVVSVL. Residues 1012–1013 lie on the Extracellular side of the membrane; that stretch reads QP. The chain crosses the membrane as a helical span at residues 1014 to 1034; that stretch reads YIFLATVPVIAAFILLRAYFL. At 1035–1095 the chain is on the cytoplasmic side; it reads QTSQQLKQLE…TASWFLYLST (61 aa). Residues 1096-1116 form a helical membrane-spanning segment; the sequence is LRWFQMRIEMIFVIFFIAVTF. The Extracellular segment spans residues 1117–1130; that stretch reads ISILTTGEGEGTVG. Residues 1131-1151 form a helical membrane-spanning segment; sequence IILTLAMNIMSTLQWAVNSSI. Over 1152–1481 the chain is Cytoplasmic; it reads DVDSLMRSVS…TEEEVQETRL (330 aa). The ABC transporter 2 domain occupies 1211 to 1444; it reads MTIKDLTAKY…KSLFRQAISH (234 aa). ATP contacts are provided by residues Y1220 and 1245–1252; that span reads GRTGSGKS. The tract at residues 1387–1481 is interaction with GORASP2; that stretch reads RALKQAFADC…TEEEVQETRL (95 aa). C1396 carries the S-palmitoyl cysteine lipid modification. Phosphoserine occurs at positions 1445 and 1457. The interval 1453–1481 is disordered; sequence HRNSSKYKSRPQIASLKEETEEEVQETRL. The segment covering 1471-1481 has biased composition (acidic residues); the sequence is ETEEEVQETRL. A PDZ-binding motif is present at residues 1479 to 1481; it reads TRL.

The protein belongs to the ABC transporter superfamily. ABCC family. CFTR transporter (TC 3.A.1.202) subfamily. In terms of assembly, monomer; does not require oligomerization for channel activity. May form oligomers in the membrane. Interacts with SLC26A3, SLC26A6 and NHERF1. Interacts with SHANK2. Interacts with MYO6. Interacts (via C-terminus) with GOPC (via PDZ domain); this promotes CFTR internalization and thereby decreases channel activity. Interacts with SLC4A7 through NHERF1. Found in a complex with MYO5B and RAB11A. Interacts with ANO1. Interacts with SLC26A8. Interacts with AHCYL1; the interaction increases CFTR activity. Interacts with CSE1L. The core-glycosylated form interacts with GORASP2 (via PDZ GRASP-type 1 domain) in respone to ER stress. Interacts with MARCHF2; the interaction leads to CFTR ubiqtuitination and degradation. Interacts with ADGRG2. Post-translationally, N-glycosylated. Phosphorylated; cAMP treatment promotes phosphorylation and activates the channel. Dephosphorylation decreases the ATPase activity (in vitro). Phosphorylation at PKA sites activates the channel. Phosphorylation at PKC sites enhances the response to phosphorylation by PKA. Phosphorylated by AMPK; this inhibits channel activity. In terms of processing, ubiquitinated, leading to its degradation in the lysosome. Deubiquitination by USP10 in early endosomes enhances its endocytic recycling to the cell membrane. Ubiquitinated by RNF185 during ER stress. Ubiquitinated by MARCHF2.

It is found in the apical cell membrane. Its subcellular location is the early endosome membrane. The protein localises to the cell membrane. It localises to the recycling endosome membrane. The protein resides in the endoplasmic reticulum membrane. It is found in the nucleus. The catalysed reaction is ATP + H2O + closed Cl(-) channel = ADP + phosphate + open Cl(-) channel.. The enzyme catalyses chloride(in) = chloride(out). It carries out the reaction hydrogencarbonate(in) = hydrogencarbonate(out). It catalyses the reaction ATP + H2O = ADP + phosphate + H(+). In terms of biological role, epithelial ion channel that plays an important role in the regulation of epithelial ion and water transport and fluid homeostasis. Mediates the transport of chloride ions across the cell membrane. Possesses an intrinsic ATPase activity and utilizes ATP to gate its channel; the passive flow of anions through the channel is gated by cycles of ATP binding and hydrolysis by the ATP-binding domains. The ion channel is also permeable to HCO(3)(-); selectivity depends on the extracellular chloride concentration. Exerts its function also by modulating the activity of other ion channels and transporters. Contributes to the regulation of the pH and the ion content of the epithelial fluid layer. Modulates the activity of the epithelial sodium channel (ENaC) complex, in part by regulating the cell surface expression of the ENaC complex. May regulate bicarbonate secretion and salvage in epithelial cells by regulating the transporter SLC4A7. Can inhibit the chloride channel activity of ANO1. Plays a role in the chloride and bicarbonate homeostasis during sperm epididymal maturation and capacitation. This chain is Cystic fibrosis transmembrane conductance regulator, found in Saimiri boliviensis boliviensis (Bolivian squirrel monkey).